The chain runs to 222 residues: Charged multivesicular body protein 2a (222 aa).

An N-acetylmethionine modification is found at methionine 1. Residues 12 to 53 are a coiled coil; it reads EELLRQNQRALNRAMRELDRERQKLETQEKKIIADIKKMAKQ. Residues 56–222 form an interaction with VPS4B region; the sequence is MDAVRIMAKD…EERLKNLRRD (167 aa). Residue serine 184 is modified to Phosphoserine. The residue at position 185 (threonine 185) is a Phosphothreonine. 3 positions are modified to phosphoserine: serine 188, serine 190, and serine 203. Positions 195-222 form a coiled coil; the sequence is GKKAEAAASALADADADLEERLKNLRRD. The MIT-interacting motif signature appears at 210-220; it reads ADLEERLKNLR. The interval 217–222 is interaction with VTA1; it reads KNLRRD.

It belongs to the SNF7 family. Probable core component of the endosomal sorting required for transport complex III (ESCRT-III). ESCRT-III components are thought to multimerize to form a flat lattice on the perimeter membrane of the endosome. Several assembly forms of ESCRT-III may exist that interact and act sequentially. In vitro, heteromerizes with CHMP3 (but not CHMP4) to form helical tubular structures that expose membrane-interacting sites on the outside whereas VPS4B can associate on the inside of the tubule. Interacts with CHMP1B, CHMP2B, CHMP3, CHMP4A, CHMP4B, CHMP4C and CHMP5. Interacts with VPS4A; the interaction is direct. Interacts with VPS4B; the interaction is direct. Interacts with MITD1. Interacts with VTA1; the interaction probably involves the open conformation of CHMP2A. ISGylated in a CHMP5-dependent manner. Isgylation weakens and inhibits its interactions with VPS4A and VTA1 respectively.

The protein localises to the late endosome membrane. It is found in the nucleus envelope. Functionally, probable core component of the endosomal sorting required for transport complex III (ESCRT-III) which is involved in multivesicular bodies (MVBs) formation and sorting of endosomal cargo proteins into MVBs. MVBs contain intraluminal vesicles (ILVs) that are generated by invagination and scission from the limiting membrane of the endosome and mostly are delivered to lysosomes enabling degradation of membrane proteins, such as stimulated growth factor receptors, lysosomal enzymes and lipids. The MVB pathway appears to require the sequential function of ESCRT-O, -I,-II and -III complexes. ESCRT-III proteins mostly dissociate from the invaginating membrane before the ILV is released. The ESCRT machinery also functions in topologically equivalent membrane fission events, such as the terminal stages of cytokinesis. Together with SPAST, the ESCRT-III complex promotes nuclear envelope sealing and mitotic spindle disassembly during late anaphase. Recruited to the reforming nuclear envelope (NE) during anaphase by LEMD2. ESCRT-III proteins are believed to mediate the necessary vesicle extrusion and/or membrane fission activities, possibly in conjunction with the AAA ATPase VPS4. In terms of biological role, (Microbial infection) The ESCRT machinery functions in topologically equivalent membrane fission events, such as the budding of enveloped viruses (HIV-1 and other lentiviruses). Involved in HIV-1 p6- and p9-dependent virus release. The sequence is that of Charged multivesicular body protein 2a (CHMP2A) from Homo sapiens (Human).